Consider the following 70-residue polypeptide: MEKLTILLLVAAVLTSTQALIQGGADERQKAKINFLSRSDRECRGYNAPCSAGAPCCSWWTCSTQTSRCF.

The first 19 residues, 1-19 (MEKLTILLLVAAVLTSTQA), serve as a signal peptide directing secretion. Residues 20 to 40 (LIQGGADERQKAKINFLSRSD) constitute a propeptide that is removed on maturation. 3 cysteine pairs are disulfide-bonded: Cys43–Cys57, Cys50–Cys62, and Cys56–Cys69.

Belongs to the conotoxin O2 superfamily. As to expression, expressed by the venom duct.

It localises to the secreted. Its function is as follows. Inhibits voltage-gated ion channels. The protein is Conotoxin Vc6.10 of Conus victoriae (Queen Victoria cone).